We begin with the raw amino-acid sequence, 83 residues long: Small ribosomal subunit protein eS21 (83 aa).

The protein belongs to the eukaryotic ribosomal protein eS21 family. In terms of assembly, component of the 40S small ribosomal subunit.

The protein localises to the cytoplasm. It is found in the cytosol. The protein resides in the rough endoplasmic reticulum. This Agriotes lineatus (Lined click beetle) protein is Small ribosomal subunit protein eS21 (RpS21).